The following is a 314-amino-acid chain: MAKGIMLHEVGEQVDLYLLIKSSTKGIASNGKPFLTLMLQDQSGDIEAKLWDAKQQDEVTYGPQTIVKVVGDIHHYRGRNQLKLRNIRPAGENENVKIDDFLETAPIPKNEMMDAVTQYIFEMKNPNIQRITRHLVKKYGKEFIDYPAATKNHHEFVSGLAYHVVSMLNLAKSVADLYPSLDRDLLYAGVILHDLGKVKELSGPVSTTYTVEGNLLGHISIMVTEIAKAAEELQIDSEEVLILQHLILSHHGKPEWGSPKPPMVKEAEILHYIDNLDAKINMMDRALERVKPGEYTERVFALDNRSFYKPVFHK.

Residues 14 to 90 constitute a DNA-binding region (OB); it reads VDLYLLIKSS…QLKLRNIRPA (77 aa). One can recognise an HD domain in the interval 163-279; it reads HVVSMLNLAK…LHYIDNLDAK (117 aa).

It belongs to the YhaM family.

Shows a 3'-5' exoribonuclease activity. The protein is 3'-5' exoribonuclease YhaM of Bacillus licheniformis (strain ATCC 14580 / DSM 13 / JCM 2505 / CCUG 7422 / NBRC 12200 / NCIMB 9375 / NCTC 10341 / NRRL NRS-1264 / Gibson 46).